Here is a 321-residue protein sequence, read N- to C-terminus: Biotin synthase (321 aa).

In terms of domain architecture, Radical SAM core spans 44-273 (FCGNVFDLCT…DGFVRIAAGR (230 aa)). [4Fe-4S] cluster-binding residues include Cys62, Cys66, and Cys69. Residues Ser106, Cys138, Cys198, and Arg268 each contribute to the [2Fe-2S] cluster site.

Belongs to the radical SAM superfamily. Biotin synthase family. In terms of assembly, homodimer. [4Fe-4S] cluster is required as a cofactor. It depends on [2Fe-2S] cluster as a cofactor.

It catalyses the reaction (4R,5S)-dethiobiotin + (sulfur carrier)-SH + 2 reduced [2Fe-2S]-[ferredoxin] + 2 S-adenosyl-L-methionine = (sulfur carrier)-H + biotin + 2 5'-deoxyadenosine + 2 L-methionine + 2 oxidized [2Fe-2S]-[ferredoxin]. Its pathway is cofactor biosynthesis; biotin biosynthesis; biotin from 7,8-diaminononanoate: step 2/2. Its function is as follows. Catalyzes the conversion of dethiobiotin (DTB) to biotin by the insertion of a sulfur atom into dethiobiotin via a radical-based mechanism. The protein is Biotin synthase of Akkermansia muciniphila (strain ATCC BAA-835 / DSM 22959 / JCM 33894 / BCRC 81048 / CCUG 64013 / CIP 107961 / Muc).